The following is a 202-amino-acid chain: NADH-quinone oxidoreductase subunit C (202 aa).

It belongs to the complex I 30 kDa subunit family. NDH-1 is composed of 14 different subunits. Subunits NuoB, C, D, E, F, and G constitute the peripheral sector of the complex.

The protein localises to the cell inner membrane. It carries out the reaction a quinone + NADH + 5 H(+)(in) = a quinol + NAD(+) + 4 H(+)(out). NDH-1 shuttles electrons from NADH, via FMN and iron-sulfur (Fe-S) centers, to quinones in the respiratory chain. The immediate electron acceptor for the enzyme in this species is believed to be ubiquinone. Couples the redox reaction to proton translocation (for every two electrons transferred, four hydrogen ions are translocated across the cytoplasmic membrane), and thus conserves the redox energy in a proton gradient. This Brucella canis (strain ATCC 23365 / NCTC 10854 / RM-666) protein is NADH-quinone oxidoreductase subunit C.